The following is a 427-amino-acid chain: Mitochondrial fission protein ELM1 (427 aa).

As to quaternary structure, interacts with DRP3 and DRP3B.

The protein localises to the mitochondrion outer membrane. Plant-specific factor involved in mitochondria fission. Is required for the correct localization of DRP3A from the cytosol to mitochondrial fission sites. Does not seem to be required for peroxisomal division. This is Mitochondrial fission protein ELM1 (ELM1) from Arabidopsis thaliana (Mouse-ear cress).